Here is a 197-residue protein sequence, read N- to C-terminus: Probable S-adenosylmethionine-dependent methyltransferase MJ0882 (197 aa).

S-adenosyl-L-methionine is bound by residues 63–67 (GCGYG), D84, and N129. 129-132 (NPPI) contacts substrate.

The protein belongs to the methyltransferase superfamily.

Functionally, probable methyltransferase that uses S-adenosylmethionine as the methyl donor. Binds neither NAD nor NADP in vitro. The polypeptide is Probable S-adenosylmethionine-dependent methyltransferase MJ0882 (Methanocaldococcus jannaschii (strain ATCC 43067 / DSM 2661 / JAL-1 / JCM 10045 / NBRC 100440) (Methanococcus jannaschii)).